The following is a 166-amino-acid chain: Phospholipase A2 inhibitor clone 02/03/06/07 (166 aa).

The first 19 residues, 1–19 (MRLILLSGLLLLGTFLANG), serve as a signal peptide directing secretion. Residues 46 to 161 (LKHAFLTVHK…CDDNLLVVCE (116 aa)) enclose the C-type lectin domain. Disulfide bonds link cysteine 83–cysteine 160 and cysteine 138–cysteine 152. An N-linked (GlcNAc...) asparagine glycan is attached at asparagine 122.

This sequence belongs to the alpha-type phospholipase A2 inhibitor family. In terms of assembly, homotrimer; non-covalently linked. As to expression, expressed by the liver.

The protein resides in the secreted. Functionally, this phospholipase A2 inhibitor binds directly phospholipase A2 in the presence or absence of calcium. The chain is Phospholipase A2 inhibitor clone 02/03/06/07 from Lachesis muta muta (Bushmaster).